A 1122-amino-acid chain; its full sequence is TSET complex member tstF (1122 aa).

The segment covering 88–126 (SSSASGINGTNNNNSGSNSSNNNNNNNGSLSNSPNNNNN) has biased composition (low complexity). Disordered regions lie at residues 88 to 131 (SSSA…AFIG) and 178 to 215 (QTLH…STNS). Polar residues predominate over residues 178 to 190 (QTLHNRSPNNTIK). The span at 191-215 (LSPNSSNNDSLNNNNNNINNNSTNS) shows a compositional bias: low complexity. WD repeat units follow at residues 298-337 (FENK…IEKQ), 342-381 (PKGT…LATQ), and 383-422 (SKVH…EVSK). The tract at residues 731–775 (NGSVGGSSSNNSANSNNSNNNNNNNNNNSNNSNNNNNSSQPILEP) is disordered.

Component of the TSET complex, a heterohexamer composed of tstA, tstB, tstC, tstD, tstE and tstF, which may act in plasma membrane turnover. tstA, tstB, tstC and tstD are likely to be the core complex members with tstE and tstF acting as associated scaffold proteins.

In Dictyostelium discoideum (Social amoeba), this protein is TSET complex member tstF.